The chain runs to 452 residues: Methionine aminopeptidase 2 (452 aa).

The segment at 1 to 91 (MTGVTGTEDT…KNKKKKKKKI (91 aa)) is disordered. Residues 8–38 (EDTKVIESKINELNIDKSKPEKTNKVNKSDD) show a composition bias toward basic and acidic residues. A compositionally biased stretch (acidic residues) spans 39-62 (VDNDDVDNDDNDDEDNDDDDDEIT). Basic residues predominate over residues 74 to 91 (KKKKKNKNKNKKKKKKKI). Residue histidine 203 participates in substrate binding. The a divalent metal cation site is built by aspartate 223, aspartate 234, and histidine 305. Histidine 313 contributes to the substrate binding site. Glutamate 338 and glutamate 433 together coordinate a divalent metal cation.

Belongs to the peptidase M24A family. Methionine aminopeptidase eukaryotic type 2 subfamily. Requires Co(2+) as cofactor. It depends on Zn(2+) as a cofactor. Mn(2+) is required as a cofactor. The cofactor is Fe(2+).

It is found in the cytoplasm. It catalyses the reaction Release of N-terminal amino acids, preferentially methionine, from peptides and arylamides.. Cotranslationally removes the N-terminal methionine from nascent proteins. The N-terminal methionine is often cleaved when the second residue in the primary sequence is small and uncharged (Met-Ala-, Cys, Gly, Pro, Ser, Thr, or Val). The sequence is that of Methionine aminopeptidase 2 from Candida dubliniensis (strain CD36 / ATCC MYA-646 / CBS 7987 / NCPF 3949 / NRRL Y-17841) (Yeast).